The primary structure comprises 271 residues: Ribose-phosphate pyrophosphokinase 2 (271 aa).

ATP is bound by residues D34 to E36 and R82 to Q83. Mg(2+)-binding residues include H115 and D150. K173 is a catalytic residue. Residues R175, D199, and S203–T207 contribute to the D-ribose 5-phosphate site.

It belongs to the ribose-phosphate pyrophosphokinase family. Class III (archaeal) subfamily. It depends on Mg(2+) as a cofactor.

The protein localises to the cytoplasm. It carries out the reaction D-ribose 5-phosphate + ATP = 5-phospho-alpha-D-ribose 1-diphosphate + AMP + H(+). It functions in the pathway metabolic intermediate biosynthesis; 5-phospho-alpha-D-ribose 1-diphosphate biosynthesis; 5-phospho-alpha-D-ribose 1-diphosphate from D-ribose 5-phosphate (route I): step 1/1. In terms of biological role, involved in the biosynthesis of the central metabolite phospho-alpha-D-ribosyl-1-pyrophosphate (PRPP) via the transfer of pyrophosphoryl group from ATP to 1-hydroxyl of ribose-5-phosphate (Rib-5-P). This Archaeoglobus fulgidus (strain ATCC 49558 / DSM 4304 / JCM 9628 / NBRC 100126 / VC-16) protein is Ribose-phosphate pyrophosphokinase 2.